We begin with the raw amino-acid sequence, 226 residues long: Putative N-acetylmannosamine-6-phosphate 2-epimerase (226 aa).

Belongs to the NanE family.

It carries out the reaction an N-acyl-D-glucosamine 6-phosphate = an N-acyl-D-mannosamine 6-phosphate. It functions in the pathway amino-sugar metabolism; N-acetylneuraminate degradation; D-fructose 6-phosphate from N-acetylneuraminate: step 3/5. Its function is as follows. Converts N-acetylmannosamine-6-phosphate (ManNAc-6-P) to N-acetylglucosamine-6-phosphate (GlcNAc-6-P). The polypeptide is Putative N-acetylmannosamine-6-phosphate 2-epimerase (Mycoplasma capricolum subsp. capricolum (strain California kid / ATCC 27343 / NCTC 10154)).